A 356-amino-acid chain; its full sequence is PEP-dependent dihydroxyacetone kinase, dihydroxyacetone-binding subunit DhaK (356 aa).

The 346-residue stretch at 7-352 (DVQDVLDEQL…WDAPVHTPAL (346 aa)) folds into the DhaK domain. Residues 53–56 (GSGH), Lys104, and Asp109 each bind dihydroxyacetone. His56 (proton acceptor) is an active-site residue. The active-site Tele-hemiaminal-histidine intermediate is His218.

As to quaternary structure, homodimer. The dihydroxyacetone kinase complex is composed of a homodimer of DhaM, a homodimer of DhaK and the subunit DhaL. DhaL also forms a complex with DhaR.

It catalyses the reaction dihydroxyacetone + phosphoenolpyruvate = dihydroxyacetone phosphate + pyruvate. It functions in the pathway polyol metabolism; glycerol degradation. Its activity is regulated as follows. Inhibited by chloro-3-hydroxyacetone and D,L-glyceraldehyde. In terms of biological role, dihydroxyacetone binding subunit of the dihydroxyacetone kinase, which is responsible for the phosphoenolpyruvate (PEP)-dependent phosphorylation of dihydroxyacetone via a phosphoryl group transfer from DhaL-ATP. Binds covalently dihydroxyacetone in hemiaminal linkage. DhaK also acts as corepressor of the transcription activator DhaR by binding to the sensor domain of DhaR. In the presence of dihydroxyacetone, DhaL-ADP displaces DhaK and stimulates DhaR activity. In the absence of dihydroxyacetone, DhaL-ADP is converted by the PTS to DhaL-ATP, which does not bind to DhaR. This Escherichia coli (strain K12) protein is PEP-dependent dihydroxyacetone kinase, dihydroxyacetone-binding subunit DhaK.